We begin with the raw amino-acid sequence, 83 residues long: Cytochrome c oxidase subunit 7A2, mitochondrial (83 aa).

Residues 1–23 (MLRNLLALRQIGQRTISTASRRH) constitute a mitochondrion transit peptide. The Mitochondrial matrix segment spans residues 24-48 (FKNKVPEKQKLFQEDDEIPLYLKGG). Lysine 33 carries the N6-acetyllysine modification. A helical membrane pass occupies residues 49–77 (VADALLYRATMILTVGGTAYAIYELAVAS). The Mitochondrial intermembrane portion of the chain corresponds to 78 to 83 (FPKKQE).

The protein belongs to the cytochrome c oxidase VIIa family. As to quaternary structure, component of the cytochrome c oxidase (complex IV, CIV), a multisubunit enzyme composed of 14 subunits. The complex is composed of a catalytic core of 3 subunits MT-CO1, MT-CO2 and MT-CO3, encoded in the mitochondrial DNA, and 11 supernumerary subunits COX4I1 (or COX4I2), COX5A, COX5B, COX6A1 (or COX6A2), COX6B1 (or COX6B2), COX6C, COX7A2 (or COX7A1), COX7B, COX7C, COX8A and NDUFA4, which are encoded in the nuclear genome. The complex exists as a monomer or a dimer and forms supercomplexes (SCs) in the inner mitochondrial membrane with NADH-ubiquinone oxidoreductase (complex I, CI) and ubiquinol-cytochrome c oxidoreductase (cytochrome b-c1 complex, complex III, CIII), resulting in different assemblies (supercomplex SCI(1)III(2)IV(1) and megacomplex MCI(2)III(2)IV(2)). Interacts with PET100.

The protein localises to the mitochondrion inner membrane. Its pathway is energy metabolism; oxidative phosphorylation. Its function is as follows. Component of the cytochrome c oxidase, the last enzyme in the mitochondrial electron transport chain which drives oxidative phosphorylation. The respiratory chain contains 3 multisubunit complexes succinate dehydrogenase (complex II, CII), ubiquinol-cytochrome c oxidoreductase (cytochrome b-c1 complex, complex III, CIII) and cytochrome c oxidase (complex IV, CIV), that cooperate to transfer electrons derived from NADH and succinate to molecular oxygen, creating an electrochemical gradient over the inner membrane that drives transmembrane transport and the ATP synthase. Cytochrome c oxidase is the component of the respiratory chain that catalyzes the reduction of oxygen to water. Electrons originating from reduced cytochrome c in the intermembrane space (IMS) are transferred via the dinuclear copper A center (CU(A)) of subunit 2 and heme A of subunit 1 to the active site in subunit 1, a binuclear center (BNC) formed by heme A3 and copper B (CU(B)). The BNC reduces molecular oxygen to 2 water molecules using 4 electrons from cytochrome c in the IMS and 4 protons from the mitochondrial matrix. The sequence is that of Cytochrome c oxidase subunit 7A2, mitochondrial (COX7A2) from Homo sapiens (Human).